The primary structure comprises 342 residues: Ferrochelatase (342 aa).

The Fe cation site is built by His188 and Glu268.

It belongs to the ferrochelatase family.

It is found in the cytoplasm. It catalyses the reaction heme b + 2 H(+) = protoporphyrin IX + Fe(2+). It functions in the pathway porphyrin-containing compound metabolism; protoheme biosynthesis; protoheme from protoporphyrin-IX: step 1/1. Functionally, catalyzes the ferrous insertion into protoporphyrin IX. The chain is Ferrochelatase from Rickettsia prowazekii (strain Madrid E).